Here is a 224-residue protein sequence, read N- to C-terminus: Uracil-DNA glycosylase (224 aa).

The active-site Proton acceptor is the aspartate 64.

Belongs to the uracil-DNA glycosylase (UDG) superfamily. UNG family.

The protein resides in the cytoplasm. The catalysed reaction is Hydrolyzes single-stranded DNA or mismatched double-stranded DNA and polynucleotides, releasing free uracil.. Functionally, excises uracil residues from the DNA which can arise as a result of misincorporation of dUMP residues by DNA polymerase or due to deamination of cytosine. The sequence is that of Uracil-DNA glycosylase from Clostridioides difficile (strain 630) (Peptoclostridium difficile).